A 293-amino-acid chain; its full sequence is Transcriptional regulator ICP22 homolog (293 aa).

Disordered regions lie at residues 1 to 49 (MPHG…QRID) and 175 to 293 (RFLE…SARR). A compositionally biased stretch (low complexity) spans 21-31 (TPSTSPLIPSL). Residues 190–210 (EECDVSGDESPSEEEEEDEAS) are compositionally biased toward acidic residues. Residues 272–281 (AAKKRRKRQP) are compositionally biased toward basic residues. The span at 282-293 (PKGERPTKSARR) shows a compositional bias: basic and acidic residues.

It belongs to the herpesviridae ICP22 family.

This is Transcriptional regulator ICP22 homolog (IR4) from Equus caballus (Horse).